Reading from the N-terminus, the 63-residue chain is Kappa-theraphotoxin-Cg3a 1 (63 aa).

Positions 1 to 21 are cleaved as a signal peptide; that stretch reads MKNTSILFILGLALLLVLAFE. Positions 22–29 are excised as a propeptide; sequence VQVGESDG. Intrachain disulfides connect Cys-31–Cys-46, Cys-38–Cys-51, and Cys-45–Cys-58.

The protein belongs to the neurotoxin 10 (Hwtx-1) family. 44 (Jztx-4) subfamily. Expressed by the venom gland.

It is found in the secreted. Functionally, gating modifier of Kv2.1/KCNB1, Kv2.2/KCNB2 and Kv4.3/KCND3 channels. The protein is Kappa-theraphotoxin-Cg3a 1 of Chilobrachys guangxiensis (Chinese earth tiger tarantula).